Consider the following 352-residue polypeptide: Nuclear receptor subfamily 1 group I member 3 (352 aa).

Residues 8–83 constitute a DNA-binding region (nuclear receptor); it reads LRNCVVCGDQ…AGMRKDMILS (76 aa). The NR C4-type zinc finger occupies 11-31; the sequence is CVVCGDQATGYHFNALTCEGC. Residue T38 is modified to Phosphothreonine; by PKC. The segment at 47–71 adopts an NR C4-type zinc-finger fold; that stretch reads CPFAGSCEVSKTQRRHCPACRLQKC. The 244-residue stretch at 109–352 folds into the NR LBD domain; the sequence is EQEELIRTLL…MMPLLQEICS (244 aa).

It belongs to the nuclear hormone receptor family. NR1 subfamily. As to quaternary structure, interacts with ECT2. Heterodimer of NR1I3 and RXR. Interacts with PSMC4. Directly interacts with DNAJC7. The DNAJC7-NR1I3 complex may also include HSP90. Interacts with CRY1. Interacts with CRY2 in a ligand-dependent manner. Post-translationally, phosphorylated at Thr-38 by PKC, dephosphorylation of Thr-38 is required for nuclear translocation and activation. Predominantly expressed in liver.

It is found in the nucleus. The protein localises to the cytoplasm. The protein resides in the cytoskeleton. Binds and transactivates the retinoic acid response elements that control expression of the retinoic acid receptor beta 2 and alcohol dehydrogenase 3 genes. Transactivates both the phenobarbital responsive element module of the human CYP2B6 gene and the CYP3A4 xenobiotic response element. The polypeptide is Nuclear receptor subfamily 1 group I member 3 (NR1I3) (Homo sapiens (Human)).